The sequence spans 317 residues: Methionyl-tRNA formyltransferase (317 aa).

112–115 (SILP) provides a ligand contact to (6S)-5,6,7,8-tetrahydrofolate.

The protein belongs to the Fmt family.

The catalysed reaction is L-methionyl-tRNA(fMet) + (6R)-10-formyltetrahydrofolate = N-formyl-L-methionyl-tRNA(fMet) + (6S)-5,6,7,8-tetrahydrofolate + H(+). Functionally, attaches a formyl group to the free amino group of methionyl-tRNA(fMet). The formyl group appears to play a dual role in the initiator identity of N-formylmethionyl-tRNA by promoting its recognition by IF2 and preventing the misappropriation of this tRNA by the elongation apparatus. The sequence is that of Methionyl-tRNA formyltransferase from Mannheimia succiniciproducens (strain KCTC 0769BP / MBEL55E).